A 146-amino-acid polypeptide reads, in one-letter code: Large ribosomal subunit protein uL15 (146 aa).

Residues 1-64 are disordered; that stretch reads MQLNTIKPAI…MPMHRRLPKR (64 aa). Over residues 30–39 the composition is skewed to basic residues; sequence TATKGHKGQK.

It belongs to the universal ribosomal protein uL15 family. As to quaternary structure, part of the 50S ribosomal subunit.

Functionally, binds to the 23S rRNA. This Geobacter sp. (strain M21) protein is Large ribosomal subunit protein uL15.